The sequence spans 321 residues: uncharacterized protein (321 aa).

The next 10 helical transmembrane spans lie at 6 to 26 (LFIG…MFPV), 37 to 57 (FYFS…LLLV), 72 to 92 (WIIL…FLGQ), 100 to 120 (IMTA…ILWG), 134 to 154 (ILIA…SFFF), 160 to 180 (LFSI…TMGG), 196 to 216 (CLFG…QGYV), 223 to 243 (VIAA…IIAL), 255 to 275 (SING…IMVI), and 277 to 297 (GYNI…GLIL). EamA domains lie at 18 to 146 (MSWG…MVIT) and 175 to 300 (VYTM…LNNI).

The protein belongs to the EamA transporter family.

The protein resides in the cell membrane. This is an uncharacterized protein from Bacillus subtilis (strain 168).